Consider the following 340-residue polypeptide: Ketol-acid reductoisomerase (NADP(+)) (340 aa).

In terms of domain architecture, KARI N-terminal Rossmann spans 1–182 (MRVYYDRDCD…GGGRSGIIET (182 aa)). Residues 24 to 27 (YGSQ), Arg48, Ser51, Ser53, and 83 to 86 (DELQ) each bind NADP(+). His108 is a catalytic residue. NADP(+) is bound at residue Gly134. One can recognise a KARI C-terminal knotted domain in the interval 183–329 (NFRQECETDL…EKLRGMMPWI (147 aa)). Mg(2+)-binding residues include Asp191, Glu195, Glu227, and Glu231. Position 252 (Ser252) interacts with substrate.

Belongs to the ketol-acid reductoisomerase family. The cofactor is Mg(2+).

The enzyme catalyses (2R)-2,3-dihydroxy-3-methylbutanoate + NADP(+) = (2S)-2-acetolactate + NADPH + H(+). It carries out the reaction (2R,3R)-2,3-dihydroxy-3-methylpentanoate + NADP(+) = (S)-2-ethyl-2-hydroxy-3-oxobutanoate + NADPH + H(+). It functions in the pathway amino-acid biosynthesis; L-isoleucine biosynthesis; L-isoleucine from 2-oxobutanoate: step 2/4. It participates in amino-acid biosynthesis; L-valine biosynthesis; L-valine from pyruvate: step 2/4. Functionally, involved in the biosynthesis of branched-chain amino acids (BCAA). Catalyzes an alkyl-migration followed by a ketol-acid reduction of (S)-2-acetolactate (S2AL) to yield (R)-2,3-dihydroxy-isovalerate. In the isomerase reaction, S2AL is rearranged via a Mg-dependent methyl migration to produce 3-hydroxy-3-methyl-2-ketobutyrate (HMKB). In the reductase reaction, this 2-ketoacid undergoes a metal-dependent reduction by NADPH to yield (R)-2,3-dihydroxy-isovalerate. This Cereibacter sphaeroides (strain ATCC 17029 / ATH 2.4.9) (Rhodobacter sphaeroides) protein is Ketol-acid reductoisomerase (NADP(+)).